The following is a 122-amino-acid chain: Small ribosomal subunit protein uS13 (122 aa).

The segment covering 97–114 (PVRGQRTHTNAKTRKGKS) has biased composition (basic residues). Residues 97 to 122 (PVRGQRTHTNAKTRKGKSRLPIAGKE) are disordered.

The protein belongs to the universal ribosomal protein uS13 family. In terms of assembly, part of the 30S ribosomal subunit. Forms a loose heterodimer with protein S19. Forms two bridges to the 50S subunit in the 70S ribosome.

Located at the top of the head of the 30S subunit, it contacts several helices of the 16S rRNA. In the 70S ribosome it contacts the 23S rRNA (bridge B1a) and protein L5 of the 50S subunit (bridge B1b), connecting the 2 subunits; these bridges are implicated in subunit movement. Contacts the tRNAs in the A and P-sites. The sequence is that of Small ribosomal subunit protein uS13 from Wolbachia sp. subsp. Brugia malayi (strain TRS).